A 759-amino-acid polypeptide reads, in one-letter code: Cullin-4A (759 aa).

The interval 1–40 (MADEGPRKGSVSALMGRTNGLTKPAALAGGPAKPGGTGGS) is disordered. A Glycyl lysine isopeptide (Lys-Gly) (interchain with G-Cter in SUMO2) cross-link involves residue Lys-8. Ser-10 bears the Phosphoserine mark. The span at 20–31 (GLTKPAALAGGP) shows a compositional bias: low complexity. Lys-33 participates in a covalent cross-link: Glycyl lysine isopeptide (Lys-Gly) (interchain with G-Cter in ubiquitin). Residues 691–750 (DRQYQIDAAIVRIMKMRKTLGHNLLVSELYNQLKFPVKPGDLKKRIESLIDRDYMERDKD) form the Cullin neddylation domain. Lys-705 participates in a covalent cross-link: Glycyl lysine isopeptide (Lys-Gly) (interchain with G-Cter in NEDD8).

It belongs to the cullin family. As to quaternary structure, can self-associate. Component of multiple DCX (DDB1-CUL4-X-box) E3 ubiquitin-protein ligase complexes that seem to consist of DDB1, CUL4A or CUL4B, RBX1 and a variable substrate recognition component which seems to belong to a protein family described as DCAF (Ddb1- and Cul4-associated factor) or CDW (CUL4-DDB1-associated WD40-repeat) proteins. Component of the CSA complex (DCX(ERCC8) complex) containing ERCC8, RBX1, DDB1 and CUL4A; the CSA complex interacts with RNA polymerase II; upon UV irradiation it interacts with the COP9 signalosome and preferentially with the hyperphosphorylated form of RNA polymerase II. Component of the DCX(DET1-COP1) complex with the substrate recognition component DET1 and COP1. Component of the DCX(DDB2) complex with the substrate recognition component DDB2. Component of the DCX(DTL) complex with the putative substrate recognition component DTL. Component of DCX complexes part of the DesCEND (destruction via C-end degrons) pathway, which contain either TRPC4AP or DCAF12 as substrate-recognition component. Component of the DCX(AMBRA1) complex with the substrate recognition component AMBRA1. Interacts with DDB1, RBX1, RNF7, CDT1, TIP120A/CAND1, SKP2, CDKN1B, MDM2, TP53 and HOXA9. Interacts with DDB2; the interactions with DDB2 and CAND1 are mutually exclusive. Interacts with DCAF1, DTL, DDA1, DCAF6, DCAF4, DCAF16, DCAF17, DET1, WDTC1, DCAF5, DCAF11, WDR24A, COP1, PAFAH1B1, ERCC8, GRWD1, FBXW5, RBBP7, GNB2, WSB1, WSB2, NUP43, PWP1, FBXW8, ATG16L1, KATNB1, RBBP4, RBBP5, LRWD1 and DCAF8. May interact with WDR26, WDR51B, SNRNP40, WDR61, WDR76, WDR5. Interacts (when neddylated) with ARIH1; leading to activate the E3 ligase activity of ARIH1. The DDB1-CUL4A complex interacts with CRY1. Interacts (unneddylated form) with DCUN1D1, DCUN1D2, DCUN1D3, DCUN1D4 and DCUN1D5; these interactions promote the cullin neddylation. (Microbial infection) Interacts with murine cytomegalovirus M48. In terms of processing, neddylated; required for activity of cullin-RING-based E3 ubiquitin-protein ligase complexes. Deneddylated via its interaction with the COP9 signalosome (CSN) complex. Post-translationally, (Microbial infection) Deneddylated by murine cytomegalovirus M48 leading to a S-phase-like environment that is required for efficient replication of the viral genome. Expressed in oocytes (at protein level). In the ovary, also expressed in cumulus cells. Expressed in testis, spleen and kidney.

Its pathway is protein modification; protein ubiquitination. Functionally, core component of multiple cullin-RING-based E3 ubiquitin-protein ligase complexes which mediate the ubiquitination of target proteins. As a scaffold protein may contribute to catalysis through positioning of the substrate and the ubiquitin-conjugating enzyme. The E3 ubiquitin-protein ligase activity of the complex is dependent on the neddylation of the cullin subunit and is inhibited by the association of the deneddylated cullin subunit with TIP120A/CAND1. The functional specificity of the E3 ubiquitin-protein ligase complex depends on the variable substrate recognition component. DCX(DET1-COP1) directs ubiquitination of JUN. DCX(DDB2) directs ubiquitination of XPC. DCX(DDB2) ubiquitinates histones H3-H4 and is required for efficient histone deposition during replication-coupled (H3.1) and replication-independent (H3.3) nucleosome assembly, probably by facilitating the transfer of H3 from ASF1A/ASF1B to other chaperones involved in histone deposition. DCX(DTL) plays a role in PCNA-dependent polyubiquitination of CDT1 and MDM2-dependent ubiquitination of p53/TP53 in response to radiation-induced DNA damage and during DNA replication. DCX(DTL) directs autoubiquitination of DTL. In association with DDB1 and SKP2 probably is involved in ubiquitination of CDKN1B/p27kip. Is involved in ubiquitination of HOXA9. The DDB1-CUL4A-DTL E3 ligase complex regulates the circadian clock function by mediating the ubiquitination and degradation of CRY1. The DCX(ERCC8) complex (also named CSA complex) plays a role in transcription-coupled repair (TCR). A number of DCX complexes (containing either TRPC4AP or DCAF12 as substrate-recognition component) are part of the DesCEND (destruction via C-end degrons) pathway, which recognizes a C-degron located at the extreme C terminus of target proteins, leading to their ubiquitination and degradation. With CUL4B, contributes to ribosome biogenesis. The DCX(AMBRA1) complex is a master regulator of the transition from G1 to S cell phase by mediating ubiquitination of phosphorylated cyclin-D (CCND1, CCND2 and CCND3). The DCX(AMBRA1) complex also acts as a regulator of Cul5-RING (CRL5) E3 ubiquitin-protein ligase complexes by mediating ubiquitination and degradation of Elongin-C (ELOC) component of CRL5 complexes. This is Cullin-4A from Mus musculus (Mouse).